The following is a 361-amino-acid chain: Actin maturation protease (361 aa).

A disordered region spans residues 1 to 75 (MTSPCSFPLK…PPPPPLPSAV (75 aa)). Composition is skewed to pro residues over residues 24–33 (NIPPPLPLNP) and 52–72 (PLPP…PPLP). The tract at residues 134-254 (SCIQEGPQCG…WAVSAGVLIG (121 aa)) is peptidase C39-like. The active site involves C142.

It belongs to the ACTMAP family. As to quaternary structure, interacts (via N-terminus) with PFN2 isoforms 1/IIa and 2/IIb; the interactions may facilitate efficient cleavage of the acetylated N-terminus of immature actin. Interacts with PFN1.

Its subcellular location is the cytoplasm. The enzyme catalyses N-terminal N(alpha)-acetyl-L-methionyl-L-aspartyl-[protein] + H2O = N-terminal L-aspartyl-[protein] + N-acetyl-L-methionine. It catalyses the reaction N-terminal N(alpha)-acetyl-L-methionyl-L-glutamyl-[protein] + H2O = N-terminal L-glutamyl-[protein] + N-acetyl-L-methionine. It carries out the reaction N-terminal N(alpha)-acetyl-L-cysteinyl-L-aspartyl-[protein] + H2O = N-terminal L-aspartyl-[protein] + N-acetyl-L-cysteine. The catalysed reaction is N-terminal N(alpha)-acetyl-L-cysteinyl-L-glutamyl-[protein] + H2O = N-terminal L-glutamyl-[protein] + N-acetyl-L-cysteine. Actin maturation protease that specifically mediates the cleavage of immature acetylated N-terminal actin, thereby contributing to actin maturation. Cleaves N-terminal acetylated methionine of immature cytoplasmic beta- and gamma-actins Actb and Actg1 after translation. Cleaves N-terminal acetylated cysteine of muscle alpha-actins Acta1, Actc1 and Acta2 after canonical removal of N-terminal methionine. This chain is Actin maturation protease, found in Mus musculus (Mouse).